We begin with the raw amino-acid sequence, 143 residues long: Transcriptional regulator SlyA (143 aa).

In terms of domain architecture, HTH marR-type spans 2–135 (ESTLGSDLAR…LSGLIDKLER (134 aa)). The segment at residues 49-72 (QIQLAKAIGIEQPSLVRTLDQLEE) is a DNA-binding region (H-T-H motif).

The protein belongs to the SlyA family. Homodimer.

Its function is as follows. Transcription regulator that can specifically activate or repress expression of target genes. In Yersinia enterocolitica serotype O:8 / biotype 1B (strain NCTC 13174 / 8081), this protein is Transcriptional regulator SlyA.